The chain runs to 181 residues: ADP-ribosylation factor-like protein 1 (181 aa).

A lipid anchor (N-myristoyl glycine) is attached at Gly-2. GTP is bound by residues 24 to 31 (GLDGAGKT), 45 to 48 (TIPT), Gly-70, 126 to 129 (NKQD), and 160 to 161 (AT). Mg(2+) contacts are provided by Thr-31 and Thr-48.

Belongs to the small GTPase superfamily. Arf family. In terms of assembly, the GTP-bound form interacts with GOLGA1. The GTP-bound form interacts with GOLGA4 and RGPD8. The GTP-bound form directly interacts with ARFIP2. Binds to SCOC, preferentially in its GTP-bound form. May interact with UNC119. Interacts with ARFIP1; this interaction directs ARFIP1 to the trans-Golgi membranes. Interacts with ARFGEF1 (via N-terminus).

It is found in the golgi apparatus membrane. The protein resides in the golgi apparatus. Its subcellular location is the trans-Golgi network membrane. The protein localises to the membrane. Functionally, GTP-binding protein that recruits several effectors, such as golgins, arfaptins and Arf-GEFs to the trans-Golgi network, and modulates their functions at the Golgi complex. Plays thereby a role in a wide range of fundamental cellular processes, including cell polarity, innate immunity, or protein secretion mediated by arfaptins, which were shown to play a role in maintaining insulin secretion from pancreatic beta cells. The protein is ADP-ribosylation factor-like protein 1 (ARL1) of Bos taurus (Bovine).